The chain runs to 212 residues: Riboflavin kinase (212 aa).

The tract at residues 1–87 (MKKSNLDLLI…HEELSDALYR (87 aa)) is H-T-H motif-like. Residues 88 to 212 (GIIIGEVVSG…DGDRIRIKTL (125 aa)) form a riboflavin kinase region. CDP is bound at residue 97 to 102 (GIGEGA). Residues Thr-124 and Asn-126 each coordinate Mg(2+). FMN is bound by residues Thr-180 and Glu-188. 193–196 (VNLR) provides a ligand contact to CDP.

Belongs to the archaeal riboflavin kinase family. Mg(2+) is required as a cofactor.

The enzyme catalyses riboflavin + CTP = CDP + FMN + H(+). The protein operates within cofactor biosynthesis; FMN biosynthesis; FMN from riboflavin (CTP route): step 1/1. In terms of biological role, catalyzes the CTP-dependent phosphorylation of riboflavin (vitamin B2) to form flavin mononucleotide (FMN). The polypeptide is Riboflavin kinase (ribK) (Pyrococcus furiosus (strain ATCC 43587 / DSM 3638 / JCM 8422 / Vc1)).